Reading from the N-terminus, the 505-residue chain is MYQLFCFLAGIIVVYKAAQYYKRRTLVTKFHCKPARISPNKSWLEYLGIASVVHADEMIRKGGLYSEIDGRFKSLDVSTFKSITLGKTTYVTKDIENIRHILSATEMNSWNLGARPIALRPFIGDGIFASEGQSWKHSRIMLRPVFAKEHVKQITSMEPYVQLLIKIIKNHEGEPLEFQTLAHLFTIDYSTDFLLGESCDSLKDFLGEESNSTLDTSLRLAFASQFNKTQQQMTIRFMLGKLAFLMYPKSFQYSIQMQKDFVDVYIDRVVGMSEEELNNHPKSYVLLYQLARQTKNRDILQDELMSILLAGRDTTASLLTFLFFELSHHPEVFNKLKEEIERHFPDVESVTFGTIQRCDYLQWCINETMRLHPSVPFNFRTAANDTVIPRGGGKSCTDPILVHKGEQVLFSFYSVNREEKYFGTNTDKFAPERWSESLRRTEFIPFSAGPRACLGQQLPRVEASYVTIRLLQTFHGLHNASKQYPPNRVVAATMRLTDGCNVCFI.

The helical transmembrane segment at Leu-4–Tyr-21 threads the bilayer. Cys-453 is a heme binding site.

The protein belongs to the cytochrome P450 family. Requires heme as cofactor.

It is found in the membrane. Functionally, together with an NADPH cytochrome P450 the enzyme system catalyzes the terminal hydroxylation as the first step in the assimilation of alkanes and fatty acids. The sequence is that of Cytochrome P450 52C1 (CYP52C1) from Candida tropicalis (Yeast).